Consider the following 509-residue polypeptide: MWVLLAVFLLTLAYLFWPKTKHSGAKYPRSLPSLPLVGSLPFLPRRGQQHENFFKLQEKYGPIYSFRLGSKTTVMIGHHQLAREVLLKKGKEFSGRPKVATLDILSDNQKGIAFADHGAHWQLHRKLVLNAFALFKDGNLKLEKIINQEANVLCDFLATQHGQSIDLSEPLSLAVTNIISFICFNFSFKNEDPALKAIQNVNDGILEVLGKEVLLDIFPALKIFPSKAMEKMKGCVETRNELLSEILEKCQENFTSDSITNLLHILMQAKVNADNNNTGPEQDSKLLSNRHMLATIADIFGAGVETTTSVIKWIVAYLLHHPSLKKRIQDSIDQNIGFNRTPTISDRNRLVLLEATIREVLRIRPVAPMLIPHKAIIDSSIGDLTIDKGTDVVVNLWALHHNEKEWQQPDLFMPERFLDPTGTQLISPSLSYLPFGAGPRSCVGEMLARQELFLFMSRLLQRFNLEIPDDGKLPSLEGNPSLVLQIKPFKVKIEVRQAWKEAQAEGSTS.

Asn202 provides a ligand contact to substrate. Cys442 is a heme binding site.

Belongs to the cytochrome P450 family. Heme serves as cofactor.

It localises to the endoplasmic reticulum membrane. It is found in the microsome membrane. It catalyses the reaction a C21-steroid + reduced [NADPH--hemoprotein reductase] + O2 = a 17alpha-hydroxy-C21-steroid + oxidized [NADPH--hemoprotein reductase] + H2O + H(+). The enzyme catalyses progesterone + reduced [NADPH--hemoprotein reductase] + O2 = 17alpha-hydroxyprogesterone + oxidized [NADPH--hemoprotein reductase] + H2O + H(+). The catalysed reaction is pregnenolone + reduced [NADPH--hemoprotein reductase] + O2 = 17alpha-hydroxypregnenolone + oxidized [NADPH--hemoprotein reductase] + H2O + H(+). It carries out the reaction 17alpha-hydroxyprogesterone + reduced [NADPH--hemoprotein reductase] + O2 = androst-4-ene-3,17-dione + acetate + oxidized [NADPH--hemoprotein reductase] + H2O + 2 H(+). It catalyses the reaction 17alpha-hydroxyprogesterone + reduced [NADPH--hemoprotein reductase] + O2 = 16alpha,17alpha-dihydroxyprogesterone + oxidized [NADPH--hemoprotein reductase] + H2O + H(+). The enzyme catalyses 16alpha,17alpha-dihydroxyprogesterone + reduced [NADPH--hemoprotein reductase] + O2 = 6beta,16alpha,17alpha-trihydroxyprogesterone + oxidized [NADPH--hemoprotein reductase] + H2O + H(+). The catalysed reaction is 17alpha-hydroxypregnenolone + reduced [NADPH--hemoprotein reductase] + O2 = 3beta-hydroxyandrost-5-en-17-one + acetate + oxidized [NADPH--hemoprotein reductase] + H2O + 2 H(+). It carries out the reaction 16alpha,17alpha-dihydroxypregnenolone + reduced [NADPH--hemoprotein reductase] + O2 = 3beta,16alpha-dihydroxy-androst-5-en-17-one + acetate + oxidized [NADPH--hemoprotein reductase] + H2O + 2 H(+). It catalyses the reaction 3beta-hydroxyandrost-5-en-17-one + reduced [NADPH--hemoprotein reductase] + O2 = 3beta,16alpha-dihydroxy-androst-5-en-17-one + oxidized [NADPH--hemoprotein reductase] + H2O + H(+). The enzyme catalyses androst-4-ene-3,17-dione + reduced [NADPH--hemoprotein reductase] + O2 = 16alpha-hydroxyandrost-4-ene-3,17-dione + oxidized [NADPH--hemoprotein reductase] + H2O + H(+). It functions in the pathway steroid hormone biosynthesis. The protein operates within steroid biosynthesis; glucocorticoid biosynthesis. Regulated predominantly by intracellular cAMP levels. The 17,20-lyase activity is stimulated by cytochrome b5, which acts as an allosteric effector increasing the Vmax of the lyase activity. In terms of biological role, a cytochrome P450 monooxygenase involved in corticoid and androgen biosynthesis. Catalyzes 17-alpha hydroxylation of C21 steroids, which is common for both pathways. A second oxidative step, required only for androgen synthesis, involves an acyl-carbon cleavage. The 17-alpha hydroxy intermediates, as part of adrenal glucocorticoids biosynthesis pathway, are precursors of cortisol. Hydroxylates steroid hormones, pregnenolone and progesterone to form 17-alpha hydroxy metabolites, followed by the cleavage of the C17-C20 bond to form C19 steroids, dehydroepiandrosterone (DHEA) and androstenedione. Has 16-alpha hydroxylase activity. Catalyzes 16-alpha hydroxylation of 17-alpha hydroxy pregnenolone, followed by the cleavage of the C17-C20 bond to form 16-alpha-hydroxy DHEA. Also 16-alpha hydroxylates androgens, relevant for estriol synthesis. Mechanistically, uses molecular oxygen inserting one oxygen atom into a substrate, and reducing the second into a water molecule, with two electrons provided by NADPH via cytochrome P450 reductase (CPR; NADPH-ferrihemoprotein reductase). The protein is Steroid 17-alpha-hydroxylase/17,20 lyase (CYP17A1) of Ovis aries (Sheep).